The chain runs to 181 residues: Large ribosomal subunit protein uL5 (181 aa).

This sequence belongs to the universal ribosomal protein uL5 family. In terms of assembly, part of the 50S ribosomal subunit; part of the 5S rRNA/L5/L18/L25 subcomplex. Contacts the 5S rRNA and the P site tRNA. Forms a bridge to the 30S subunit in the 70S ribosome.

In terms of biological role, this is one of the proteins that bind and probably mediate the attachment of the 5S RNA into the large ribosomal subunit, where it forms part of the central protuberance. In the 70S ribosome it contacts protein S13 of the 30S subunit (bridge B1b), connecting the 2 subunits; this bridge is implicated in subunit movement. Contacts the P site tRNA; the 5S rRNA and some of its associated proteins might help stabilize positioning of ribosome-bound tRNAs. The chain is Large ribosomal subunit protein uL5 from Helicobacter pylori (strain HPAG1).